The sequence spans 506 residues: 2-isopropylmalate synthase (506 aa).

One can recognise a Pyruvate carboxyltransferase domain in the interval 4-266 (ILFMDTTLRD…QSSIILKEIK (263 aa)). Mn(2+) contacts are provided by aspartate 13, histidine 201, histidine 203, and asparagine 237. The segment at 390–506 (NIKQLQVHFV…KLKALLTLVK (117 aa)) is regulatory domain.

It belongs to the alpha-IPM synthase/homocitrate synthase family. LeuA type 1 subfamily. In terms of assembly, homodimer. Requires Mn(2+) as cofactor.

The protein resides in the cytoplasm. The catalysed reaction is 3-methyl-2-oxobutanoate + acetyl-CoA + H2O = (2S)-2-isopropylmalate + CoA + H(+). It participates in amino-acid biosynthesis; L-leucine biosynthesis; L-leucine from 3-methyl-2-oxobutanoate: step 1/4. Its function is as follows. Catalyzes the condensation of the acetyl group of acetyl-CoA with 3-methyl-2-oxobutanoate (2-ketoisovalerate) to form 3-carboxy-3-hydroxy-4-methylpentanoate (2-isopropylmalate). The sequence is that of 2-isopropylmalate synthase from Bacillus cytotoxicus (strain DSM 22905 / CIP 110041 / 391-98 / NVH 391-98).